The following is a 482-amino-acid chain: Falcipain-2b (482 aa).

The Cytoplasmic portion of the chain corresponds to Met1 to Ser35. Residues Met1–Asp241 constitute a propeptide, activation peptide. The Bipartite vacuolar targeting signal 1 signature appears at Gln16–Val25. The chain crosses the membrane as a helical; Signal-anchor for type II membrane protein span at residues Leu36 to Thr56. Residues Pro57–Glu482 lie on the Lumenal side of the membrane. N-linked (GlcNAc...) asparagine glycosylation is present at Asn67. Residues Lys84 to Asn105 carry the Bipartite vacuolar targeting signal 2 motif. A glycan (N-linked (GlcNAc...) asparagine) is linked at Asn117. The Nose motif; required for the correct folding of the mature form signature appears at Gln242 to Phe258. 4 disulfides stabilise this stretch: Cys280/Cys321, Cys314/Cys355, Cys340/Cys360, and Cys409/Cys470. The active site involves Cys283. The active site involves His415. The Arm motif; binds to host hemoglobin and required for the inhibitory interaction between the propeptide and the catalytic domain motif lies at Glu426 to Gly435.

Belongs to the peptidase C1 family. Component of the hemozoin formation complex (HFC) composed of falcipains FP2A and/or FP2B, plasmepsins PMII, PMIII/HAP and PMIV, heme detoxifying protein HDP and falcilysin FLN. The HFC complex is involved in hemoglobin degradation and detoxification of heme in the food vacuole during the asexual blood stage.

It localises to the vacuole. The protein localises to the membrane. Its function is as follows. Cysteine protease which cleaves native host hemoglobin in the food vacuole during the asexual blood stage. Preferentially cleaves substrates which have a leucine at the P2 position. The protein is Falcipain-2b of Plasmodium falciparum (isolate 3D7).